Reading from the N-terminus, the 264-residue chain is Thymidylate synthase (264 aa).

Arg21 is a dUMP binding site. A (6R)-5,10-methylene-5,6,7,8-tetrahydrofolate-binding site is contributed by His51. 126–127 (RR) contributes to the dUMP binding site. Cys146 (nucleophile) is an active-site residue. DUMP-binding positions include 166 to 169 (RSAD), Asn177, and 207 to 209 (HLY). Residue Asp169 coordinates (6R)-5,10-methylene-5,6,7,8-tetrahydrofolate. Ala263 is a binding site for (6R)-5,10-methylene-5,6,7,8-tetrahydrofolate.

This sequence belongs to the thymidylate synthase family. Bacterial-type ThyA subfamily. As to quaternary structure, homodimer.

It localises to the cytoplasm. The enzyme catalyses dUMP + (6R)-5,10-methylene-5,6,7,8-tetrahydrofolate = 7,8-dihydrofolate + dTMP. Its pathway is pyrimidine metabolism; dTTP biosynthesis. Its function is as follows. Catalyzes the reductive methylation of 2'-deoxyuridine-5'-monophosphate (dUMP) to 2'-deoxythymidine-5'-monophosphate (dTMP) while utilizing 5,10-methylenetetrahydrofolate (mTHF) as the methyl donor and reductant in the reaction, yielding dihydrofolate (DHF) as a by-product. This enzymatic reaction provides an intracellular de novo source of dTMP, an essential precursor for DNA biosynthesis. The sequence is that of Thymidylate synthase from Bartonella tribocorum (strain CIP 105476 / IBS 506).